Consider the following 677-residue polypeptide: mRNA export factor Gle1 (677 aa).

The span at 34–48 shows a compositional bias: basic and acidic residues; it reads EDREPIWVEGSRKTP. 3 disordered regions span residues 34-65, 113-136, and 294-366; these read EDRE…NNEI, KQDA…DQLQ, and ERQR…ATST. A compositionally biased stretch (pro residues) spans 49-60; the sequence is EPPLPEESPAPE. 2 coiled-coil regions span residues 122 to 179 and 280 to 346; these read ETQQ…QKLH and QQQL…AANV. Over residues 294–340 the composition is skewed to basic and acidic residues; it reads ERQRQQQQEEERQKLEEQQKLEEQEKLRKEKEESAAKEKQQEAETAK.

The protein belongs to the GLE1 family. In terms of assembly, may associate with the NPC.

It localises to the cytoplasm. The protein resides in the nucleus. Its subcellular location is the nuclear pore complex. Functionally, required for the export of mRNAs containing poly(A) tails from the nucleus into the cytoplasm. May be involved in the terminal step of the mRNA transport through the nuclear pore complex (NPC). This is mRNA export factor Gle1 from Drosophila melanogaster (Fruit fly).